Consider the following 353-residue polypeptide: MESFKFKFCLCGDNCPSEREFSKYCVYTDDQQYFYTQKRLIPVIITETKKRVRKYPVNVKYVEIDINDVVDFFEYNIKNYIFTIFRELPIIMSGDCYYESSTIEIIKYIAKNNITNLSIFFIKNSKYFYNNAIFNGICCFSNLDVVKSIIKYIPISLLQNCLNHGFIHSNNDVVEYLLKTYMKYVKCILSKKKIKGTMFHLDSPKTVFLKLRSSLKYLLKLKYQKAMVIYEYIIDQFSQLENDLIETDIENDMIEIRDKIISKIQYNNEIATHILKDSLSYKQDDNLSFTRQLILDGGNLNNICDYAIDLIIMYKNINLLDLMYDKKLICQNDLNHILMSSSKTDPEFIQELI.

It belongs to the mimivirus L17x/L18x family.

This is an uncharacterized protein from Acanthamoeba polyphaga (Amoeba).